We begin with the raw amino-acid sequence, 419 residues long: DNA ligase (419 aa).

The segment at 1–120 (MLSQFPGQCS…ARQKRGAHTN (120 aa)) is NTD. The tract at residues 121–317 (RGMIPPMLVK…NYHSPHLAKL (197 aa)) is AD domain. ATP-binding residues include H149, K151, E203, and F232. Catalysis depends on K151, which acts as the N6-AMP-lysine intermediate. E203 lines the a divalent metal cation pocket. E291 provides a ligand contact to a divalent metal cation. The ATP site is built by I294 and K316. The tract at residues 318 to 419 (KPLLDAEFIL…REPINVLEII (102 aa)) is OB domain.

Belongs to the ATP-dependent DNA ligase family. The cofactor is a divalent metal cation.

It localises to the virion. It catalyses the reaction ATP + (deoxyribonucleotide)n-3'-hydroxyl + 5'-phospho-(deoxyribonucleotide)m = (deoxyribonucleotide)n+m + AMP + diphosphate.. Functionally, very low-fidelity DNA ligase that seals nicks in double-stranded DNA during DNA repair. Together with the viral repair DNA polymerase X, fills the single nucleotide gaps generated by the AP endonuclease. It is not essential for viral replication and recombination. Displays a very low adenylation activity towards DNA with 3'-dideoxy- or 3'-amino-terminated nicks compared to regular nick DNA. The chain is DNA ligase (LIG) from Ornithodoros (relapsing fever ticks).